We begin with the raw amino-acid sequence, 260 residues long: CD320 antigen (260 aa).

The N-terminal stretch at Met-1 to Ala-28 is a signal peptide. Over Ala-29 to Gly-208 the chain is Extracellular. Residues Ser-46–Arg-83 enclose the LDL-receptor class A 1 domain. Disulfide bonds link Cys-47/Cys-60, Cys-54/Cys-73, and Cys-67/Cys-82. Trp-65, Asp-68, Asp-70, Asp-72, Asp-78, and Glu-79 together coordinate Ca(2+). An N-linked (GlcNAc...) asparagine glycan is attached at Asn-118. The LDL-receptor class A 2 domain occupies Pro-123 to Asp-160. Intrachain disulfides connect Cys-124-Cys-137, Cys-131-Cys-150, and Cys-144-Cys-159. Ca(2+) contacts are provided by Trp-142, Asp-145, His-147, Asp-149, Asp-155, and Glu-156. N-linked (GlcNAc...) asparagine glycosylation is present at Asn-185. A helical membrane pass occupies residues Val-209–Leu-229. At Arg-230 to Ile-260 the chain is on the cytoplasmic side.

Interacts (via LDL-receptor class A domains) with TCN2.

It localises to the cell membrane. Functionally, receptor for transcobalamin saturated with cobalamin (TCbl). Plays an important role in cobalamin uptake. Plasma membrane protein that is expressed on follicular dendritic cells (FDC) and mediates interaction with germinal center B cells. Functions as a costimulator to promote B cell responses to antigenic stimuli; promotes B cell differentiation and proliferation. Germinal center-B (GC-B) cells differentiate into memory B-cells and plasma cells (PC) through interaction with T-cells and follicular dendritic cells (FDC). CD320 augments the proliferation of PC precursors generated by IL-10. This chain is CD320 antigen (Cd320), found in Mus musculus (Mouse).